Consider the following 60-residue polypeptide: Large ribosomal subunit protein bL32 (60 aa).

A disordered region spans residues 1-47; it reads MAVQQNRKTRSKRGMRRSHDALTSSTLSTDPTTGEKHRRHHVTADGF. Basic residues predominate over residues 7–16; that stretch reads RKTRSKRGMR.

Belongs to the bacterial ribosomal protein bL32 family.

In Teredinibacter turnerae (strain ATCC 39867 / T7901), this protein is Large ribosomal subunit protein bL32.